The primary structure comprises 61 residues: Large ribosomal subunit protein bL28 (61 aa).

This sequence belongs to the bacterial ribosomal protein bL28 family.

This is Large ribosomal subunit protein bL28 from Lactobacillus gasseri (strain ATCC 33323 / DSM 20243 / BCRC 14619 / CIP 102991 / JCM 1131 / KCTC 3163 / NCIMB 11718 / NCTC 13722 / AM63).